Consider the following 493-residue polypeptide: Arginine decarboxylase (493 aa).

Lys-229 bears the N6-(pyridoxal phosphate)lysine mark.

This sequence belongs to the Orn/Lys/Arg decarboxylase class-I family. The cofactor is pyridoxal 5'-phosphate.

It localises to the cytoplasm. The enzyme catalyses L-arginine + H(+) = agmatine + CO2. It participates in amine and polyamine biosynthesis; agmatine biosynthesis; agmatine from L-arginine: step 1/1. Its function is as follows. Catalyzes the formation of agmatine from arginine. In Bacillus anthracis, this protein is Arginine decarboxylase (speA).